The primary structure comprises 649 residues: Acetyl-coenzyme A synthetase (649 aa).

Residues 189–192, threonine 311, and asparagine 335 each bind CoA; that span reads RGGK. ATP is bound by residues 387–389, 411–416, aspartate 500, and arginine 515; these read GEP and DTWWQT. Serine 523 serves as a coordination point for CoA. An ATP-binding site is contributed by arginine 526. Mg(2+) is bound by residues valine 537, histidine 539, and valine 542. Residue arginine 584 coordinates CoA. Lysine 609 carries the N6-acetyllysine modification.

The protein belongs to the ATP-dependent AMP-binding enzyme family. Mg(2+) is required as a cofactor. Acetylated. Deacetylation by the SIR2-homolog deacetylase activates the enzyme.

It carries out the reaction acetate + ATP + CoA = acetyl-CoA + AMP + diphosphate. Catalyzes the conversion of acetate into acetyl-CoA (AcCoA), an essential intermediate at the junction of anabolic and catabolic pathways. AcsA undergoes a two-step reaction. In the first half reaction, AcsA combines acetate with ATP to form acetyl-adenylate (AcAMP) intermediate. In the second half reaction, it can then transfer the acetyl group from AcAMP to the sulfhydryl group of CoA, forming the product AcCoA. The polypeptide is Acetyl-coenzyme A synthetase (Sinorhizobium medicae (strain WSM419) (Ensifer medicae)).